Consider the following 203-residue polypeptide: Recombination protein RecR (203 aa).

The segment at 56–71 (CAVCGNVSDEERCRIC) adopts a C4-type zinc-finger fold. Positions 79-179 (SLICVVEEPK…TVTRIASGLP (101 aa)) constitute a Toprim domain.

The protein belongs to the RecR family.

May play a role in DNA repair. It seems to be involved in an RecBC-independent recombinational process of DNA repair. It may act with RecF and RecO. In Mycolicibacterium vanbaalenii (strain DSM 7251 / JCM 13017 / BCRC 16820 / KCTC 9966 / NRRL B-24157 / PYR-1) (Mycobacterium vanbaalenii), this protein is Recombination protein RecR.